The following is a 628-amino-acid chain: MLNRMKSARPKSVAPKSGQALLTLGALGVVFGDIGTSPLYSLHTAFSMQHNKVEVTPENVYGIISMVLWTITLIVTVKYVMLVTRADNQGQGGILALVALLKNRGHWGKFVAVAGMLGAALFYGDVVITPAISVLSATEGLTVISPSFERFILPISLAVLIAIFAIQPLGTEKVGKAFGPIMLLWFVTLAGLGIPQIIVHPEILQSLSPHWALGLIVAEPFQAFVLLGAVVLTVTGAEALYADMGHFGARPIRVAWFCVVMPALILTYLGQGALVINQPEAVRNPMFYLAPEGLRIPLVILATIATVIASQAVISGAYSLTKQAVNLKLLPRMVIRHTSRKEEGQIYMPLVNGLLFVSVMVVVLVFRSSESLASAYGLAVTGTLVLVSVLYLIYVHTTWWKTALFIVFIGIPEVLLFASNTTKIHDGGWLPLLTAAVLIVVMRTWEWGSDRVNQERAELELPMDKFLEKLDQPHNIGLRKVAEVAVFPHGTSDTVPLSLVRCVKDLKLLYREIVIVRIVQEHVPHVPPAERAEMEVLHHAPIRVVRVDLHLGYFDEQNLPENLHAIDPTWDNATYFLSALTLRSRLPGKIAGWRDRLYLSMERNQASRTESFKLQPSKTITVGTELHL.

A run of 12 helical transmembrane segments spans residues 20 to 40, 63 to 83, 110 to 130, 151 to 171, 178 to 198, 212 to 232, 256 to 276, 296 to 316, 346 to 366, 375 to 395, 398 to 418, and 422 to 442; these read ALLTLGALGVVFGDIGTSPLY, IISMVLWTITLIVTVKYVMLV, FVAVAGMLGAALFYGDVVITP, FILPISLAVLIAIFAIQPLGT, FGPIMLLWFVTLAGLGIPQII, ALGLIVAEPFQAFVLLGAVVL, WFCVVMPALILTYLGQGALVI, IPLVILATIATVIASQAVISG, IYMPLVNGLLFVSVMVVVLVF, AYGLAVTGTLVLVSVLYLIYV, TWWKTALFIVFIGIPEVLLFA, and TKIHDGGWLPLLTAAVLIVVM.

It belongs to the HAK/KUP transporter (TC 2.A.72) family.

Its subcellular location is the cell membrane. It carries out the reaction K(+)(in) + H(+)(in) = K(+)(out) + H(+)(out). In terms of biological role, transport of potassium into the cell. Likely operates as a K(+):H(+) symporter. The protein is Probable potassium transport system protein Kup of Corynebacterium glutamicum (strain R).